Consider the following 141-residue polypeptide: Large ribosomal subunit protein uL11 (141 aa).

Belongs to the universal ribosomal protein uL11 family. As to quaternary structure, part of the ribosomal stalk of the 50S ribosomal subunit. Interacts with L10 and the large rRNA to form the base of the stalk. L10 forms an elongated spine to which 2 L12 dimers bind in a sequential fashion forming a pentameric L10(L12)2(L12)2 complex. In stalled/isolated 50S subunits interacts with RqcH. One or more lysine residues are methylated.

Functionally, forms part of the ribosomal stalk which helps the ribosome interact with GTP-bound translation factors. Required to recruit RqcH, which is part of the ribosome quality control system (RQC), to stalled 50S ribosomal subunits. The chain is Large ribosomal subunit protein uL11 from Bacillus subtilis (strain 168).